An 82-amino-acid polypeptide reads, in one-letter code: Small ribosomal subunit protein uS17 (82 aa).

Belongs to the universal ribosomal protein uS17 family. Part of the 30S ribosomal subunit.

Functionally, one of the primary rRNA binding proteins, it binds specifically to the 5'-end of 16S ribosomal RNA. The polypeptide is Small ribosomal subunit protein uS17 (Shewanella pealeana (strain ATCC 700345 / ANG-SQ1)).